The chain runs to 147 residues: Hemoglobin subunit gamma (147 aa).

The Globin domain maps to 3–147 (HFTVEEKAVI…VAIALAHKYH (145 aa)). Positions 64 and 93 each coordinate heme b.

Belongs to the globin family. As to quaternary structure, heterotetramer of two alpha chains and two gamma chains in fetal hemoglobin (Hb F). In terms of tissue distribution, red blood cells.

Gamma chains make up the fetal hemoglobin F, in combination with alpha chains. The protein is Hemoglobin subunit gamma (HBG) of Cheirogaleus medius (Fat-tailed dwarf lemur).